The sequence spans 489 residues: 5'-AMP-activated protein kinase subunit gamma-3 (489 aa).

Positions 1–113 (MEPGLEHALR…PAGVGTPPTG (113 aa)) are disordered. Over residues 34 to 46 (SSSWPSPAVTSSS) the composition is skewed to low complexity. Positions 50 to 62 (RGKRRAKALRWTR) are enriched in basic residues. CBS domains lie at 197–258 (MATS…RSPL), 280–340 (CFKP…LLPR), and 355–415 (TFRD…HLDM). ADP-binding positions include arginine 225, 240–245 (MLTITD), valine 285, 306–307 (HR), and lysine 325. AMP contacts are provided by residues arginine 225, 240–245 (MLTITD), valine 285, histidine 306, 306–307 (HR), lysine 325, threonine 355, alanine 360, 381–382 (SA), 397–400 (SRFD), arginine 424, leucine 432, histidine 453, 453–454 (HR), and 469–472 (SLSD). ATP contacts are provided by residues arginine 225, 240–245 (MLTITD), valine 285, 306–307 (HR), arginine 307, and lysine 325. The short motif at 293-314 (LFEAVYTLIKNRIHRLPVLDPV) is the AMPK pseudosubstrate element. ADP is bound by residues 397 to 400 (SRFD), arginine 424, leucine 432, and 453 to 454 (HR). ATP is bound by residues 397–400 (SRFD), arginine 424, leucine 432, and 453–454 (HR). Positions 427–486 (CLEGVLSCQPHESLGEVIDRIAREQVHRLVLVDETQHLLGVVSLSDILQALVLSPAGIDA) constitute a CBS 4 domain.

It belongs to the 5'-AMP-activated protein kinase gamma subunit family. As to quaternary structure, AMPK is a heterotrimer of an alpha catalytic subunit (PRKAA1 or PRKAA2), a beta (PRKAB1 or PRKAB2) and a gamma non-catalytic subunits (PRKAG1, PRKAG2 or PRKAG3). Interacts with FNIP1 and FNIP2. Phosphorylated by ULK1; leading to negatively regulate AMPK activity and suggesting the existence of a regulatory feedback loop between ULK1 and AMPK. In terms of processing, glycosylated; O-GlcNAcylated by OGT, promoting the AMP-activated protein kinase (AMPK) activity. In terms of tissue distribution, skeletal muscle, with weak expression in heart and pancreas.

In terms of biological role, AMP/ATP-binding subunit of AMP-activated protein kinase (AMPK), an energy sensor protein kinase that plays a key role in regulating cellular energy metabolism. In response to reduction of intracellular ATP levels, AMPK activates energy-producing pathways and inhibits energy-consuming processes: inhibits protein, carbohydrate and lipid biosynthesis, as well as cell growth and proliferation. AMPK acts via direct phosphorylation of metabolic enzymes, and by longer-term effects via phosphorylation of transcription regulators. AMPK also acts as a regulator of cellular polarity by remodeling the actin cytoskeleton; probably by indirectly activating myosin. The AMPK gamma3 subunit is a non-catalytic subunit with a regulatory role in muscle energy metabolism. It mediates binding to AMP, ADP and ATP, leading to AMPK activation or inhibition: AMP-binding results in allosteric activation of alpha catalytic subunit (PRKAA1 or PRKAA2) both by inducing phosphorylation and preventing dephosphorylation of catalytic subunits. ADP also stimulates phosphorylation, without stimulating already phosphorylated catalytic subunit. ATP promotes dephosphorylation of catalytic subunit, rendering the AMPK enzyme inactive. The polypeptide is 5'-AMP-activated protein kinase subunit gamma-3 (PRKAG3) (Homo sapiens (Human)).